The sequence spans 178 residues: Glucagon-1 (178 aa).

The N-terminal stretch at 1 to 21 is a signal peptide; it reads MFGIHSLAGVLLLVIVQRQLA. 3 consecutive propeptides follow at residues 83 to 87, 123 to 134, and 171 to 178; these read SGAPS, ESAEESRNGPMS, and SNKRQEDH.

This sequence belongs to the glucagon family.

It is found in the secreted. Its function is as follows. Promotes hydrolysis of glycogen and lipids, and raises the blood sugar level. This is Glucagon-1 (gcg1) from Oncorhynchus mykiss (Rainbow trout).